The sequence spans 111 residues: Small ribosomal subunit protein bS16 (111 aa).

Belongs to the bacterial ribosomal protein bS16 family.

In Rickettsia africae (strain ESF-5), this protein is Small ribosomal subunit protein bS16.